The sequence spans 471 residues: Alpha-galactosidase (471 aa).

Positions 1-18 (MSYIYLFITAAAVTGALG) are cleaved as a signal peptide. A disulfide bridge connects residues Cys-42 and Cys-74. Positions 72 and 73 each coordinate substrate. Asn-82 is a glycosylation site (N-linked (GlcNAc...) asparagine). Cys-121 and Cys-151 are joined by a disulfide. Lys-147 contacts substrate. Catalysis depends on Asp-149, which acts as the Nucleophile. Residue Asn-175 is glycosylated (N-linked (GlcNAc...) asparagine). Arg-205 provides a ligand contact to substrate. Catalysis depends on Asp-209, which acts as the Proton donor. Intrachain disulfides connect Cys-221/Cys-237 and Cys-223/Cys-230. Residue Gln-251 participates in substrate binding. Residues Asn-270, Asn-361, Asn-370, Asn-417, Asn-422, Asn-435, and Asn-454 are each glycosylated (N-linked (GlcNAc...) asparagine).

It belongs to the glycosyl hydrolase 27 family. Homotetramer.

The protein localises to the secreted. The enzyme catalyses Hydrolysis of terminal, non-reducing alpha-D-galactose residues in alpha-D-galactosides, including galactose oligosaccharides, galactomannans and galactolipids.. The chain is Alpha-galactosidase (MEL) from Saccharomyces mikatae (Yeast).